The following is an 88-amino-acid chain: UPF0223 protein OB1419 (88 aa).

It belongs to the UPF0223 family.

This chain is UPF0223 protein OB1419, found in Oceanobacillus iheyensis (strain DSM 14371 / CIP 107618 / JCM 11309 / KCTC 3954 / HTE831).